We begin with the raw amino-acid sequence, 255 residues long: tRNA (guanine-N(7)-)-methyltransferase (255 aa).

The interval 1 to 35 (MTRTNDASGGGKLPRKRFYRARAHSNPLSDSHFPV) is disordered. Positions 13–23 (LPRKRFYRARA) are enriched in basic residues. S-adenosyl-L-methionine is bound by residues Gly-75, 98-99 (EL), 131-132 (NS), and Leu-151. Asp-154 is an active-site residue. 229-231 (TEE) provides a ligand contact to S-adenosyl-L-methionine.

This sequence belongs to the class I-like SAM-binding methyltransferase superfamily. TrmB family.

It is found in the nucleus. The catalysed reaction is guanosine(46) in tRNA + S-adenosyl-L-methionine = N(7)-methylguanosine(46) in tRNA + S-adenosyl-L-homocysteine. It participates in tRNA modification; N(7)-methylguanine-tRNA biosynthesis. Functionally, catalyzes the formation of N(7)-methylguanine at position 46 (m7G46) in tRNA. In Zea mays (Maize), this protein is tRNA (guanine-N(7)-)-methyltransferase.